Consider the following 92-residue polypeptide: Cell division topological specificity factor (92 aa).

The protein belongs to the MinE family.

In terms of biological role, prevents the cell division inhibition by proteins MinC and MinD at internal division sites while permitting inhibition at polar sites. This ensures cell division at the proper site by restricting the formation of a division septum at the midpoint of the long axis of the cell. This chain is Cell division topological specificity factor, found in Gluconobacter oxydans (strain 621H) (Gluconobacter suboxydans).